The sequence spans 214 residues: 3-demethoxyubiquinol 3-hydroxylase (214 aa).

Fe cation contacts are provided by Glu63, Glu93, His96, Glu145, Glu177, and His180.

The protein belongs to the COQ7 family. The cofactor is Fe cation.

The protein resides in the cell membrane. The catalysed reaction is a 5-methoxy-2-methyl-3-(all-trans-polyprenyl)benzene-1,4-diol + AH2 + O2 = a 3-demethylubiquinol + A + H2O. Its pathway is cofactor biosynthesis; ubiquinone biosynthesis. Its function is as follows. Catalyzes the hydroxylation of 2-nonaprenyl-3-methyl-6-methoxy-1,4-benzoquinol during ubiquinone biosynthesis. The chain is 3-demethoxyubiquinol 3-hydroxylase from Nitrosococcus oceani (strain ATCC 19707 / BCRC 17464 / JCM 30415 / NCIMB 11848 / C-107).